A 416-amino-acid chain; its full sequence is Type II methyltransferase M.PspPI (416 aa).

Positions 77–410 (YSLVELFAGA…KAIIRMLNAA (334 aa)) constitute an SAM-dependent MTase C5-type domain. Residue cysteine 149 is part of the active site.

This sequence belongs to the class I-like SAM-binding methyltransferase superfamily. C5-methyltransferase family.

The catalysed reaction is a 2'-deoxycytidine in DNA + S-adenosyl-L-methionine = a 5-methyl-2'-deoxycytidine in DNA + S-adenosyl-L-homocysteine + H(+). In terms of biological role, a methylase, recognizes the double-stranded sequence 5'-GGNCC-3', methylates C-4 on both strands, and protects the DNA from cleavage by the PspPI endonuclease. This is Type II methyltransferase M.PspPI from Psychrobacter sp. (strain TA137).